A 327-amino-acid polypeptide reads, in one-letter code: Phenylalanine--tRNA ligase alpha subunit (327 aa).

Glu-252 lines the Mg(2+) pocket.

This sequence belongs to the class-II aminoacyl-tRNA synthetase family. Phe-tRNA synthetase alpha subunit type 1 subfamily. In terms of assembly, tetramer of two alpha and two beta subunits. Requires Mg(2+) as cofactor.

It is found in the cytoplasm. The catalysed reaction is tRNA(Phe) + L-phenylalanine + ATP = L-phenylalanyl-tRNA(Phe) + AMP + diphosphate + H(+). This Hamiltonella defensa subsp. Acyrthosiphon pisum (strain 5AT) protein is Phenylalanine--tRNA ligase alpha subunit.